A 574-amino-acid chain; its full sequence is Phosphatidylinositol 4-kinase gamma 3 (574 aa).

Ubiquitin-like domains are found at residues 32 to 109 (PILV…SDLQ) and 110 to 188 (AISV…AKVR). Residues 257 to 555 (GNGPIRSSDG…IVPTETTEDE (299 aa)) form the PI3K/PI4K catalytic domain. Positions 263–269 (SSDGSGG) are G-loop. Residues 264 to 270 (SDGSGGA), Lys-286, and 381 to 384 (QMFV) contribute to the ATP site. Positions 414–422 (ANADRHAGN) are catalytic loop. An activation loop region spans residues 438-464 (PIDHGYCFPNKFEDCTFEWLYWPQAKE). Asp-440 is an ATP binding site.

Belongs to the PI3/PI4-kinase family. Type II PI4K subfamily.

The enzyme catalyses a 1,2-diacyl-sn-glycero-3-phospho-(1D-myo-inositol) + ATP = a 1,2-diacyl-sn-glycero-3-phospho-(1D-myo-inositol 4-phosphate) + ADP + H(+). In terms of biological role, the phosphorylation of phosphatidylinositol (PI) to PI4P is the first committed step in the generation of phosphatidylinositol 4,5-bisphosphate (PIP2), a precursor of the second messenger inositol 1,4,5-trisphosphate (InsP3). In Arabidopsis thaliana (Mouse-ear cress), this protein is Phosphatidylinositol 4-kinase gamma 3 (PI4KG3).